The chain runs to 322 residues: uncharacterized protein (322 aa).

In terms of domain architecture, Radical SAM core spans 26–267; sequence HFGHKVFKVA…CDQLEIIPPE (242 aa). [4Fe-4S] cluster contacts are provided by Cys42, Cys54, and Cys57.

Belongs to the radical SAM superfamily. Requires [4Fe-4S] cluster as cofactor.

This is an uncharacterized protein from Bacillus subtilis (strain 168).